The chain runs to 171 residues: Neuronal vesicle trafficking-associated protein 2 (171 aa).

The tract at residues methionine 1–glycine 21 is disordered. At methionine 1–threonine 71 the chain is on the cytoplasmic side. Residues valine 72–tyrosine 92 traverse the membrane as a helical; Signal-anchor for type II membrane protein segment. Over lysine 93–histidine 171 the chain is Lumenal.

This sequence belongs to the NSG family.

The protein resides in the membrane. The protein localises to the golgi apparatus. Its subcellular location is the trans-Golgi network membrane. It localises to the cell projection. It is found in the dendrite. The protein resides in the endosome membrane. The protein localises to the early endosome membrane. Its subcellular location is the late endosome membrane. It localises to the lysosome lumen. It is found in the cytoplasmic vesicle membrane. The protein resides in the golgi stack membrane. The protein localises to the endosome. Its subcellular location is the multivesicular body membrane. The polypeptide is Neuronal vesicle trafficking-associated protein 2 (Bos taurus (Bovine)).